Here is a 132-residue protein sequence, read N- to C-terminus: Regulator of ribonuclease activity B (132 aa).

The protein belongs to the RraB family. Interacts with the C-terminal region of Rne.

It is found in the cytoplasm. Functionally, globally modulates RNA abundance by binding to RNase E (Rne) and regulating its endonucleolytic activity. Can modulate Rne action in a substrate-dependent manner by altering the composition of the degradosome. The protein is Regulator of ribonuclease activity B of Alteromonas mediterranea (strain DSM 17117 / CIP 110805 / LMG 28347 / Deep ecotype).